The sequence spans 289 residues: Pseudouridine-5'-phosphate glycosidase (289 aa).

Residue Glu10 is the Proton donor of the active site. Substrate is bound by residues Lys71 and Val91. Asp121 is a binding site for Mn(2+). 123–125 (SQD) lines the substrate pocket. Lys142 (nucleophile) is an active-site residue.

It belongs to the pseudouridine-5'-phosphate glycosidase family. As to quaternary structure, homotrimer. The cofactor is Mn(2+).

The enzyme catalyses D-ribose 5-phosphate + uracil = psi-UMP + H2O. Its function is as follows. Catalyzes the reversible cleavage of pseudouridine 5'-phosphate (PsiMP) to ribose 5-phosphate and uracil. Functions biologically in the cleavage direction, as part of a pseudouridine degradation pathway. The polypeptide is Pseudouridine-5'-phosphate glycosidase (Kosmotoga olearia (strain ATCC BAA-1733 / DSM 21960 / TBF 19.5.1)).